A 391-amino-acid polypeptide reads, in one-letter code: Ammonium transporter Amt1 (391 aa).

Topologically, residues 1-7 (MSDGNVA) are extracellular. Residues 8 to 27 (WILASTALVMLMVPGVGFFY) traverse the membrane as a helical segment. At 28 to 38 (AGMVRRKNAVN) the chain is on the cytoplasmic side. A helical membrane pass occupies residues 39 to 57 (MIALSFISLIITVLLWIFY). Over 58-89 (GYSVSFGNDISGIIGGLNYALLSGVKGEDLLF) the chain is Extracellular. Residues 90–106 (MMYQMMFAAVTIAILTS) form a helical membrane-spanning segment. At 107–113 (AIAERAK) the chain is on the cytoplasmic side. Residues 114–137 (VSSFILLSALWLTFVYAPFAHWLW) traverse the membrane as a helical segment. Topologically, residues 138–152 (GGGWLAKLGALDFAG) are extracellular. Residues 153-170 (GMVVHISSGFAALAVAMT) form a helical membrane-spanning segment. Residues 171 to 188 (IGKRAGFEEYSIEPHSIP) lie on the Cytoplasmic side of the membrane. Residues 189-208 (LTLIGAALLWFGWFGFNGGS) traverse the membrane as a helical segment. The Extracellular segment spans residues 209-217 (ALAANDVAI). A helical transmembrane segment spans residues 218-237 (NAVVVTNTSAAVAGFVWMVI). Topologically, residues 238 to 245 (GWIKGKPG) are cytoplasmic. A helical transmembrane segment spans residues 246-263 (SLGIVSGAIAGLAAITPA). The Extracellular segment spans residues 264–268 (AGFVD). A helical transmembrane segment spans residues 269–287 (VKGAIVIGLVAGIVCYLAM). Residues 288–300 (DFRIKKKIDESLD) are Cytoplasmic-facing. Residues 301-319 (AWAIHGIGGLWGSVAVGIL) traverse the membrane as a helical segment. At 320-337 (ANPEVNGYAGLLFGNPQL) the chain is on the extracellular side. A helical membrane pass occupies residues 338 to 363 (LVSQLIAVASTTAYAFLVTLILAKAV). Topologically, residues 364-391 (DAAVGLRVSSQEEYVGLDLSQHEEVAYT) are cytoplasmic.

It belongs to the ammonia transporter channel (TC 1.A.11.2) family. Homotrimer.

The protein resides in the cell membrane. In terms of biological role, involved in the uptake of ammonium/ammonia (NH(4)(+)/NH(3)). Transport is electrogenic. Transport the ammonium and methylammonium cation with high specificity. This is Ammonium transporter Amt1 from Archaeoglobus fulgidus (strain ATCC 49558 / DSM 4304 / JCM 9628 / NBRC 100126 / VC-16).